A 421-amino-acid chain; its full sequence is FAD-dependent monooxygenase atnJ (421 aa).

The helical transmembrane segment at 9 to 29 (LVPLHVVIVGAGIGGLSAAVA) threads the bilayer. FAD-binding residues include E41 and A54. R188 is a catalytic residue. Positions 303 and 316 each coordinate FAD. The interval 371 to 392 (RDGDAQAARDSQRKATSGTGQN) is disordered.

The protein belongs to the paxM FAD-dependent monooxygenase family. FAD serves as cofactor.

It is found in the membrane. Its pathway is secondary metabolite biosynthesis; terpenoid biosynthesis. FAD-dependent monooxygenase; part of the gene cluster that mediates the biosynthesis of the meroterpenoids arthripenoids. The pathway begins with the HR-PKS atnH that catalyzes two chain-extension steps to form a reduced triketide, which then primes the SAT domain in the NR-PKS atnG to initiate three more cycles of extension to give a linear hexaketide corresponding to the polyketide part of arthripenoids. The FAD-dependent monooxygenase atnJ then performs an oxidative decarboxylation at C11 of the atnH/atnG product, via an electrophilic aromatic hydroxylation with concomitant ipso-decarboxylation. The membrane-bound polyprenyl transferase atnF then introduces a farnesyl group before the FAD-dependent monooxygenase atnK functions as the first epoxidase on terminal C12'-C13' olefin, followed by a second epoxidation on C7'-C8' catalyzed by atnA. The terpene cyclase/mutase atnI then initiates the sequential tricyclic ring formation through protonation of the terminal epoxide and catalyzes the regioselective and stereoselective 6/6/6-tricyclic ring formation. The cytochrome P450 monooxygenase atnM is responsible for hydroxylating both C1' and C10'. The next steps may involve ketoreduction and acetyl transfer by the ketoreductase atnB and the acetyltransferase atnC, and lead to the production of arthripenoid B, the final biosynthetic product of the atn cluster. The hydroquinone moiety in arthripenoid B is prone to undergo spontaneous oxidation to afford a benzoquinone compound, a key intermediate for generating structure diversity. For instance, addition of a cysteine followed by ring contraction gives arthripenoid A, tautomerization gives the main product arthripenoid C, addition of a molecular of water or amine affords arthripenoid D or E, respectively, and loss of one water forms arthripenoid F. The sequence is that of FAD-dependent monooxygenase atnJ from Arthrinium sp.